Here is a 527-residue protein sequence, read N- to C-terminus: Phosphoethanolamine transferase OpgE (527 aa).

Residues 1-33 (MNLTLKESLVTRSRVFSPWTAFYFLQSLLINLG) lie on the Periplasmic side of the membrane. The chain crosses the membrane as a helical span at residues 34–54 (LGYPFSLLYTAAFTAILLLLW). Over 55–62 (RTLPRVQK) the chain is Cytoplasmic. The helical transmembrane segment at 63–83 (VLVGVSSLVAACYFPFAQAYG) threads the bilayer. At 84–106 (APNFNTLLALHSTNMEESTEILT) the chain is on the periplasmic side. Residues 107–127 (IFPWYSYLVGLFIFALGVIAI) traverse the membrane as a helical segment. Topologically, residues 128–146 (RRKKENEKARWNTFDSLCL) are cytoplasmic. The chain crosses the membrane as a helical span at residues 147-167 (VFSVATFFVAPVQNLAWGGVF). The Periplasmic segment spans residues 168-527 (KLKDTGYPVF…LGTDIFDPKP (360 aa)).

This sequence belongs to the phosphoethanolamine transferase family.

Its subcellular location is the cell inner membrane. Its pathway is glycan metabolism; osmoregulated periplasmic glucan (OPG) biosynthesis. Its function is as follows. Catalyzes the addition of a phosphoethanolamine moiety to the osmoregulated periplasmic glucan (OPG) backbone. This Escherichia coli (strain K12) protein is Phosphoethanolamine transferase OpgE (opgE).